The following is a 1828-amino-acid chain: Unconventional myosin-Va (1828 aa).

Ala-2 carries the N-acetylalanine modification. The Myosin N-terminal SH3-like domain maps to 8 to 60; the sequence is TKFARVWIPDPEEVWKSAELLKDYKPGDKVLLLHLEEGKDLEYRLDPKTSELP. A Myosin motor domain is found at 69–763; the sequence is VGENDLTALS…QVAYLEKLRA (695 aa). Residue 163-170 participates in ATP binding; sequence GESGAGKT. The interval 599-633 is disordered; that stretch reads ISPTSATSSGRTPLTRVPVKPTKGRPGQTAKEHKK. Residue Ser-600 is modified to Phosphoserine. The span at 600–610 shows a compositional bias: polar residues; that stretch reads SPTSATSSGRT. The tract at residues 643-665 is actin-binding; the sequence is LHLLMETLNATTPHYVRCIKPND. IQ domains lie at 766 to 788, 789 to 813, 814 to 836, 837 to 861, 862 to 884, and 885 to 914; these read LRAA…RYLC, MQRA…KFLR, RTKA…KYKI, RRAA…RKIL, REHK…HYKR, and TMKA…EARS. Coiled coils occupy residues 914–1239 and 1314–1418; these read SVER…EVNA and GLKE…ELEV. Thr-1032 carries the phosphothreonine modification. The disordered stretch occupies residues 1105 to 1147; it reads VPKPGHKRTDSTHSSNESEYTFSSEFAETEDIAPRTEEPTEKK. A compositionally biased stretch (polar residues) spans 1116-1130; the sequence is THSSNESEYTFSSEF. Positions 1136–1147 are enriched in basic and acidic residues; sequence IAPRTEEPTEKK. A phosphoserine mark is found at Ser-1425 and Ser-1625. In terms of domain architecture, Dilute spans 1507 to 1783; it reads TSTINSIKKV…IRTIQVRLRD (277 aa). Thr-1733 is modified (phosphothreonine).

The protein belongs to the TRAFAC class myosin-kinesin ATPase superfamily. Myosin family. In terms of assembly, may be a homodimer, which associates with multiple calmodulin or myosin light chains. Interacts with RIPL2, the interaction is required for its role in dendrite formation. Interacts with MLPH. Interacts with SYTL4. Interacts with MYRIP. Interacts with RAB10; mediates the transport to the plasma membrane of SLC2A4/GLUT4 storage vesicles. Interacts with FMR1; this interaction occurs in association with polyribosome.

It carries out the reaction ATP + H2O = ADP + phosphate + H(+). Processive actin-based motor that can move in large steps approximating the 36-nm pseudo-repeat of the actin filament. Can hydrolyze ATP in the presence of actin, which is essential for its function as a motor protein. Involved in melanosome transport. Also mediates the transport of vesicles to the plasma membrane. May also be required for some polarization process involved in dendrite formation. The protein is Unconventional myosin-Va (Myo5a) of Rattus norvegicus (Rat).